Here is a 146-residue protein sequence, read N- to C-terminus: Large-conductance mechanosensitive channel (146 aa).

2 helical membrane passes run 14 to 34 (VLDL…VNSL) and 81 to 101 (GLFL…FLLV).

Belongs to the MscL family. As to quaternary structure, homopentamer.

It localises to the cell membrane. Its function is as follows. Channel that opens in response to stretch forces in the membrane lipid bilayer. May participate in the regulation of osmotic pressure changes within the cell. This is Large-conductance mechanosensitive channel from Symbiobacterium thermophilum (strain DSM 24528 / JCM 14929 / IAM 14863 / T).